We begin with the raw amino-acid sequence, 203 residues long: Casparian strip membrane protein 1 (203 aa).

The residue at position 2 (Ala2) is an N-acetylalanine. At 2–40 the chain is on the cytoplasmic side; the sequence is AKESTTIDVGEPSTVTKSSSHVVKKKGFVAAAAGGGAKR. Residues 41–61 form a helical membrane-spanning segment; the sequence is GLAIFDFLLRLAAIGVTIGAA. At 62–92 the chain is on the extracellular side; the sequence is SVMYTAQETLPFFTQFLQFQAGYDDLPAFQY. A helical transmembrane segment spans residues 93 to 113; it reads FVIAVAIVASYLVLSLPFSIV. The Cytoplasmic segment spans residues 114–124; it reads TIVRPLAVAPR. The helical transmembrane segment at 125–145 threads the bilayer; sequence LILLIFDTLVVTLNTSAAAAA. Residues 146 to 177 are Extracellular-facing; the sequence is ASIVYLAHNGNQSTNWLPICQQFGDFCQNVST. Asn156 and Asn174 each carry an N-linked (GlcNAc...) asparagine glycan. A helical membrane pass occupies residues 178-198; it reads AVVAASIAILFFIVLIIISAI. The Cytoplasmic segment spans residues 199-203; the sequence is ALKRH.

This sequence belongs to the Casparian strip membrane proteins (CASP) family. As to quaternary structure, homodimer and heterodimers.

It localises to the cell membrane. Regulates membrane-cell wall junctions and localized cell wall deposition. Required for establishment of the Casparian strip membrane domain (CSD) and the subsequent formation of Casparian strips, a cell wall modification of the root endodermis that determines an apoplastic barrier between the intraorganismal apoplasm and the extraorganismal apoplasm and prevents lateral diffusion. The chain is Casparian strip membrane protein 1 from Arabidopsis lyrata subsp. lyrata (Lyre-leaved rock-cress).